Reading from the N-terminus, the 294-residue chain is Urease accessory protein UreD 1 (294 aa).

The interval 1 to 20 (MALSLDDLPEKPAPAEPVSA) is disordered.

Belongs to the UreD family. In terms of assembly, ureD, UreF and UreG form a complex that acts as a GTP-hydrolysis-dependent molecular chaperone, activating the urease apoprotein by helping to assemble the nickel containing metallocenter of UreC. The UreE protein probably delivers the nickel.

The protein localises to the cytoplasm. Its function is as follows. Required for maturation of urease via the functional incorporation of the urease nickel metallocenter. The chain is Urease accessory protein UreD 1 from Methylorubrum populi (strain ATCC BAA-705 / NCIMB 13946 / BJ001) (Methylobacterium populi).